Here is a 396-residue protein sequence, read N- to C-terminus: Probable sugar efflux transporter (396 aa).

The next 12 membrane-spanning stretches (helical) occupy residues 15–35, 50–70, 81–101, 103–123, 136–156, 169–189, 209–229, 246–266, 275–295, 301–321, 333–353, and 364–384; these read VVTLAIAAFIFNTTEFVPVGL, VGIMLTIYAWVVAVMSLPFML, LICLFVLFIASHVLSFLAWNF, VLVISRIGIAFAHAIFWSITA, AQALSLIATGTALAMVLGLPI, TFFAIGMGALITLLCLIKLLP, PALMSLYVLTVVVVTAHYTAY, FATVLLLILGGAGIIGSLVFG, SLVSIAIALLVVCLLLLLPAA, LAILSIFWGIAIMVIGLGMQV, VAMALFSGIFNIGIGAGALVG, and AIGYIGDIPACAALVWAVLIF.

Belongs to the major facilitator superfamily. SotB (TC 2.A.1.2) family.

It is found in the cell inner membrane. Functionally, involved in the efflux of sugars. The physiological role may be the reduction of the intracellular concentration of toxic sugars or sugar metabolites. The sequence is that of Probable sugar efflux transporter from Salmonella paratyphi C (strain RKS4594).